The chain runs to 53 residues: MLRYAIIFFVIAIIAAVFGFGGIAAGAAEIAKILFYIFVVIFLVTLLLGVVRR.

2 consecutive transmembrane segments (helical) span residues 5–25 and 30–50; these read AIIF…GIAA and IAKI…LLGV.

The protein belongs to the UPF0391 family.

The protein localises to the cell membrane. The protein is UPF0391 membrane protein BamMC406_6344 of Burkholderia ambifaria (strain MC40-6).